Consider the following 1347-residue polypeptide: Protocadherin-11 X-linked (1347 aa).

The N-terminal stretch at 1 to 23 (MDLLSGTYIFAVLLACVVFHSGA) is a signal peptide. Residues 24–812 (QEKNYTIREE…VSSPTSDYVK (789 aa)) lie on the Extracellular side of the membrane. Cadherin domains follow at residues 26 to 139 (KNYT…APLF), 140 to 249 (PATV…HPVF), 250 to 355 (KETE…VPSI), 362 to 466 (NPVN…APVF), 467 to 570 (TQSF…SPVF), 571 to 673 (THNE…KPVF), and 677 to 795 (PSNY…APVT). Residues Asn-27, Asn-48, and Asn-54 are each glycosylated (N-linked (GlcNAc...) asparagine). An N-linked (GlcNAc...) asparagine glycan is attached at Asn-344. N-linked (GlcNAc...) asparagine glycosylation is present at Asn-553. Residue Asn-773 is glycosylated (N-linked (GlcNAc...) asparagine). A helical transmembrane segment spans residues 813–833 (ILVAAVAGTITVVVVIFITAV). The Cytoplasmic segment spans residues 834 to 1347 (VRCRQAPHLK…DSPVMEEHPL (514 aa)). 3 disordered regions span residues 1057-1091 (LPEGSQESSSDGGLGDHDAGSLTSTSHGLPLGYPQ), 1097-1116 (RATPSNRTEGDGNSDPESTF), and 1325-1347 (TFTPRQQARPSRGDSPVMEEHPL).

The protein resides in the cell membrane. Its function is as follows. Potential calcium-dependent cell-adhesion protein. This Pan paniscus (Pygmy chimpanzee) protein is Protocadherin-11 X-linked (PCDH11X).